A 398-amino-acid chain; its full sequence is Na(+)/H(+) antiporter NhaA (398 aa).

The next 12 membrane-spanning stretches (helical) occupy residues 8–28, 59–79, 96–116, 124–144, 154–174, 177–197, 202–222, 223–243, 261–281, 292–312, 328–348, and 362–382; these read FLQL…LALI, LLLW…GMEI, LPVI…SFII, AGWA…LSLL, VFLL…IALF, AELH…LLML, VMLL…VLKS, GVHA…IRGA, YFIL…GLSW, IIVG…WLAV, LFGL…IGGL, and LGIL…LRNA.

Belongs to the NhaA Na(+)/H(+) (TC 2.A.33) antiporter family.

It is found in the cell inner membrane. It carries out the reaction Na(+)(in) + 2 H(+)(out) = Na(+)(out) + 2 H(+)(in). In terms of biological role, na(+)/H(+) antiporter that extrudes sodium in exchange for external protons. This is Na(+)/H(+) antiporter NhaA from Tolumonas auensis (strain DSM 9187 / NBRC 110442 / TA 4).